The following is a 145-amino-acid chain: Copper transporter 6 (145 aa).

2 helical membrane passes run 47 to 67 (LGMYVLCLIVVFLLAVIVEWL) and 99 to 119 (YLVMLAVMSFNGGVFIVAIAG).

Belongs to the copper transporter (Ctr) (TC 1.A.56) family. SLC31A subfamily.

The protein resides in the membrane. Involved in the transport of copper. This chain is Copper transporter 6 (COPT6), found in Arabidopsis thaliana (Mouse-ear cress).